Here is a 375-residue protein sequence, read N- to C-terminus: Lipid-A-disaccharide synthase (375 aa).

This sequence belongs to the LpxB family.

It catalyses the reaction a lipid X + a UDP-2-N,3-O-bis[(3R)-3-hydroxyacyl]-alpha-D-glucosamine = a lipid A disaccharide + UDP + H(+). It participates in bacterial outer membrane biogenesis; LPS lipid A biosynthesis. In terms of biological role, condensation of UDP-2,3-diacylglucosamine and 2,3-diacylglucosamine-1-phosphate to form lipid A disaccharide, a precursor of lipid A, a phosphorylated glycolipid that anchors the lipopolysaccharide to the outer membrane of the cell. The polypeptide is Lipid-A-disaccharide synthase (Pseudomonas putida (strain ATCC 47054 / DSM 6125 / CFBP 8728 / NCIMB 11950 / KT2440)).